The sequence spans 124 residues: Small ribosomal subunit protein bS6 (124 aa).

The protein belongs to the bacterial ribosomal protein bS6 family.

Functionally, binds together with bS18 to 16S ribosomal RNA. The sequence is that of Small ribosomal subunit protein bS6 from Actinobacillus pleuropneumoniae serotype 7 (strain AP76).